The primary structure comprises 374 residues: uncharacterized protein (374 aa).

Residues 86–104 (RPAATAGTTPATGASGSAR) are compositionally biased toward low complexity. A disordered region spans residues 86 to 109 (RPAATAGTTPATGASGSARPTDAA). Positions 179 to 354 (WWRRSNTTRG…LQRVVFAVHG (176 aa)) constitute a Macro domain.

This is an uncharacterized protein from Mycobacterium tuberculosis (strain CDC 1551 / Oshkosh).